Reading from the N-terminus, the 100-residue chain is Small ribosomal subunit protein uS17 (100 aa).

The protein belongs to the universal ribosomal protein uS17 family. As to quaternary structure, part of the 30S ribosomal subunit.

One of the primary rRNA binding proteins, it binds specifically to the 5'-end of 16S ribosomal RNA. The sequence is that of Small ribosomal subunit protein uS17 from Fervidobacterium nodosum (strain ATCC 35602 / DSM 5306 / Rt17-B1).